An 809-amino-acid polypeptide reads, in one-letter code: Zinc finger CCCH domain-containing protein 24 (809 aa).

Met-1 carries the N-acetylmethionine modification. The tract at residues 1 to 74 (METSSIEINE…NLESSDTKIT (74 aa)) is disordered. Residues 30-46 (ETSSIDELPSSDSNATD) are compositionally biased toward polar residues. The span at 51-65 (VGEKRKRADEDEKTN) shows a compositional bias: basic and acidic residues. The segment at 79–107 (WWKTSLCSYFRREASCSHGNECKYAHGEA) adopts a C3H1-type zinc-finger fold. 2 residues coordinate S-adenosyl-L-methionine: Gln-536 and Glu-586. The tract at residues 652–693 (EEMTNSEHVADQNLPPSNTQVEELQDNEQKDSSSLEPEKTTK) is disordered. Positions 678–692 (NEQKDSSSLEPEKTT) are enriched in basic and acidic residues. Asp-704 serves as a coordination point for S-adenosyl-L-methionine. Cys-732 acts as the Nucleophile in catalysis.

This sequence belongs to the class I-like SAM-binding methyltransferase superfamily. RNA M5U methyltransferase family.

This is Zinc finger CCCH domain-containing protein 24 from Arabidopsis thaliana (Mouse-ear cress).